The sequence spans 353 residues: Phosphoribosylformylglycinamidine cyclo-ligase (353 aa).

The protein belongs to the AIR synthase family.

Its subcellular location is the cytoplasm. It catalyses the reaction 2-formamido-N(1)-(5-O-phospho-beta-D-ribosyl)acetamidine + ATP = 5-amino-1-(5-phospho-beta-D-ribosyl)imidazole + ADP + phosphate + H(+). It participates in purine metabolism; IMP biosynthesis via de novo pathway; 5-amino-1-(5-phospho-D-ribosyl)imidazole from N(2)-formyl-N(1)-(5-phospho-D-ribosyl)glycinamide: step 2/2. This chain is Phosphoribosylformylglycinamidine cyclo-ligase, found in Ralstonia nicotianae (strain ATCC BAA-1114 / GMI1000) (Ralstonia solanacearum).